A 439-amino-acid chain; its full sequence is Homeobox protein ceh-32 (439 aa).

Positions 183-243 form a DNA-binding region, homeobox; that stretch reads WDGEQKTHCF…KNRRQRDRAA (61 aa). 3 disordered regions span residues 253–293, 344–365, and 379–439; these read GVEL…SHIP, EEEN…KKRS, and VSPS…SQSE. 2 stretches are compositionally biased toward acidic residues: residues 264–274 and 344–358; these read SDSDDDFEDSM and EEEN…EADI. The segment covering 379 to 392 has biased composition (polar residues); it reads VSPSQCSPCSNESL. The segment covering 398–428 has biased composition (basic and acidic residues); sequence VKTEEVKKEDDEAAEEDSRSVKSETSEDPKH.

The protein belongs to the SIX/Sine oculis homeobox family. As to quaternary structure, interacts with gmn-1. Expressed in the posterior gonad. Expressed in some cells in the head that are probably neurons. Expressed in the dorsal and ventral neuron RMD pair and the inner labial neuron class IL1. Not expressed in BAG neurons.

Its subcellular location is the nucleus. In terms of biological role, transcription factor which binds a motif with the core sequence 5'-GTATCA-3'. Plays a role in head morphogenesis. Involved in embryonic development. Required for cell specification of the RIA interneurons. May cooperate with the transcription factor vab-3 and phosphatase eya-1 to repress transcription factor ets-5 expression in non BAG neuronal cells. In Caenorhabditis elegans, this protein is Homeobox protein ceh-32.